We begin with the raw amino-acid sequence, 142 residues long: Large ribosomal subunit protein uL11 (142 aa).

Belongs to the universal ribosomal protein uL11 family. As to quaternary structure, part of the ribosomal stalk of the 50S ribosomal subunit. Interacts with L10 and the large rRNA to form the base of the stalk. L10 forms an elongated spine to which L12 dimers bind in a sequential fashion forming a multimeric L10(L12)X complex. One or more lysine residues are methylated.

In terms of biological role, forms part of the ribosomal stalk which helps the ribosome interact with GTP-bound translation factors. This chain is Large ribosomal subunit protein uL11, found in Tolumonas auensis (strain DSM 9187 / NBRC 110442 / TA 4).